The primary structure comprises 153 residues: Transcriptional repressor NrdR (153 aa).

A zinc finger spans residues 3 to 34; it reads CPYCNADDTKVIDSRLAAEGAQVRRRRQCNQC. In terms of domain architecture, ATP-cone spans 49–139; that stretch reads PRIIKSNGRI…VYRDFQDIEA (91 aa).

The protein belongs to the NrdR family. Requires Zn(2+) as cofactor.

In terms of biological role, negatively regulates transcription of bacterial ribonucleotide reductase nrd genes and operons by binding to NrdR-boxes. The sequence is that of Transcriptional repressor NrdR from Psychrobacter sp. (strain PRwf-1).